Reading from the N-terminus, the 296-residue chain is 33 kDa chaperonin (296 aa).

2 disulfide bridges follow: C233-C235 and C267-C270.

This sequence belongs to the HSP33 family. In terms of processing, under oxidizing conditions two disulfide bonds are formed involving the reactive cysteines. Under reducing conditions zinc is bound to the reactive cysteines and the protein is inactive.

It is found in the cytoplasm. Its function is as follows. Redox regulated molecular chaperone. Protects both thermally unfolding and oxidatively damaged proteins from irreversible aggregation. Plays an important role in the bacterial defense system toward oxidative stress. The polypeptide is 33 kDa chaperonin (Actinobacillus pleuropneumoniae serotype 5b (strain L20)).